A 181-amino-acid chain; its full sequence is Small ribosomal subunit protein uS4 (181 aa).

Residues 104-166 enclose the S4 RNA-binding domain; that stretch reads RRLQTIVYKK…VTSSFKSRPP (63 aa).

It belongs to the universal ribosomal protein uS4 family. Part of the 30S ribosomal subunit. Contacts protein S5. The interaction surface between S4 and S5 is involved in control of translational fidelity.

Its function is as follows. One of the primary rRNA binding proteins, it binds directly to 16S rRNA where it nucleates assembly of the body of the 30S subunit. In terms of biological role, with S5 and S12 plays an important role in translational accuracy. The polypeptide is Small ribosomal subunit protein uS4 (Saccharolobus islandicus (strain Y.N.15.51 / Yellowstone #2) (Sulfolobus islandicus)).